Here is a 124-residue protein sequence, read N- to C-terminus: Glutaredoxin-2 (124 aa).

C13 and C16 are oxidised to a cystine.

This sequence belongs to the glutaredoxin family. Homodimer.

The protein localises to the host cytoplasm. Its function is as follows. Glutaredoxin necessary for virion morphogenesis and virus replication. Functions as a thiol-disulfide transfer protein between membrane-associated OPG128 and substrates OPG095 or OPG053. The complete pathway for formation of disulfide bonds in intracellular virion membrane proteins sequentially involves oxidation of OPG072, OPG128 and OPG088. Exhibit thioltransferase and dehydroascorbate reductase activities in vitro. The chain is Glutaredoxin-2 (OPG088) from Bos taurus (Bovine).